Reading from the N-terminus, the 746-residue chain is Chitin biosynthesis protein CHS6 (746 aa).

Residues 1-25 are disordered; the sequence is MNLFWPSETKKQNEIPGGDYTPGNS. The CHS5-binding stretch occupies residues 734–746; sequence LAWIADLDHTVQP.

The protein belongs to the CHAPS family. Component of the CHS5/6 complex composed of the 4 CHAPS proteins BCH1, BCH2, BUD7, and CHS6 as well as at least CHS5 and GTP-bound ARF1. The complex interacts with the cargo protein CHS3.

Its subcellular location is the golgi apparatus. The protein localises to the trans-Golgi network membrane. Its function is as follows. Member of the CHS5-ARF1P-binding proteins (CHAPS) which mediates export of specific cargo proteins, including chitin synthase CHS3. This chain is Chitin biosynthesis protein CHS6 (CHS6), found in Saccharomyces cerevisiae (strain ATCC 204508 / S288c) (Baker's yeast).